Here is a 405-residue protein sequence, read N- to C-terminus: 4-hydroxy-3-methylbut-2-enyl diphosphate reductase (405 aa).

Cysteine 66 contacts [4Fe-4S] cluster. Position 96 (histidine 96) interacts with (2E)-4-hydroxy-3-methylbut-2-enyl diphosphate. Histidine 96 serves as a coordination point for dimethylallyl diphosphate. An isopentenyl diphosphate-binding site is contributed by histidine 96. Position 157 (cysteine 157) interacts with [4Fe-4S] cluster. Histidine 185 serves as a coordination point for (2E)-4-hydroxy-3-methylbut-2-enyl diphosphate. Residue histidine 185 participates in dimethylallyl diphosphate binding. Histidine 185 provides a ligand contact to isopentenyl diphosphate. The Proton donor role is filled by glutamate 187. Residue threonine 250 participates in (2E)-4-hydroxy-3-methylbut-2-enyl diphosphate binding. Cysteine 288 is a binding site for [4Fe-4S] cluster. (2E)-4-hydroxy-3-methylbut-2-enyl diphosphate-binding residues include serine 317, serine 318, asparagine 319, and serine 380. Residues serine 317, serine 318, asparagine 319, and serine 380 each coordinate dimethylallyl diphosphate. 4 residues coordinate isopentenyl diphosphate: serine 317, serine 318, asparagine 319, and serine 380.

It belongs to the IspH family. Requires [4Fe-4S] cluster as cofactor.

The catalysed reaction is isopentenyl diphosphate + 2 oxidized [2Fe-2S]-[ferredoxin] + H2O = (2E)-4-hydroxy-3-methylbut-2-enyl diphosphate + 2 reduced [2Fe-2S]-[ferredoxin] + 2 H(+). It catalyses the reaction dimethylallyl diphosphate + 2 oxidized [2Fe-2S]-[ferredoxin] + H2O = (2E)-4-hydroxy-3-methylbut-2-enyl diphosphate + 2 reduced [2Fe-2S]-[ferredoxin] + 2 H(+). It functions in the pathway isoprenoid biosynthesis; dimethylallyl diphosphate biosynthesis; dimethylallyl diphosphate from (2E)-4-hydroxy-3-methylbutenyl diphosphate: step 1/1. The protein operates within isoprenoid biosynthesis; isopentenyl diphosphate biosynthesis via DXP pathway; isopentenyl diphosphate from 1-deoxy-D-xylulose 5-phosphate: step 6/6. Its function is as follows. Catalyzes the conversion of 1-hydroxy-2-methyl-2-(E)-butenyl 4-diphosphate (HMBPP) into a mixture of isopentenyl diphosphate (IPP) and dimethylallyl diphosphate (DMAPP). Acts in the terminal step of the DOXP/MEP pathway for isoprenoid precursor biosynthesis. The polypeptide is 4-hydroxy-3-methylbut-2-enyl diphosphate reductase (Prochlorococcus marinus (strain SARG / CCMP1375 / SS120)).